Reading from the N-terminus, the 115-residue chain is Methylmalonyl-CoA decarboxylase subunit delta (115 aa).

Residues 11 to 31 (WLIMAINMTVVFAVLIALGIL) form a helical membrane-spanning segment. Residues 46-70 (EAPAATAPVATPTATPVAPANASAQ) are disordered. Residues 48 to 65 (PAATAPVATPTATPVAPA) are compositionally biased toward low complexity.

It belongs to the OadG family. As to quaternary structure, the methylmalonyl-CoA decarboxylase is composed of five subunits: the carboxyltransferase alpha subunit (MmdA), the tunnel beta subunit (MmdB), the biotin-containing gamma subunit (MmdC), and the delta (MmdD) and epsilon (MmdE) subunits. In terms of processing, the N-terminus is blocked.

Its subcellular location is the cell membrane. It catalyses the reaction (S)-methylmalonyl-CoA + Na(+)(in) + H(+)(out) = propanoyl-CoA + Na(+)(out) + CO2. Its activity is regulated as follows. Completely inhibited by avidin. Its function is as follows. Subunit of the sodium ion pump methylmalonyl-CoA decarboxylase, which converts the chemical energy of a decarboxylation reaction into an electrochemical gradient of Na(+) ions across the cytoplasmic membrane, thereby creating a sodium ion motive force that is used for ATP synthesis. The delta subunit is required for catalytic activity as well as for the proper assembly of the individual subunits to an enzyme complex. Can also convert malonyl-CoA into acetyl-CoA. In Veillonella parvula (Staphylococcus parvulus), this protein is Methylmalonyl-CoA decarboxylase subunit delta.